The primary structure comprises 103 residues: NADH-quinone oxidoreductase subunit K 1 (103 aa).

Helical transmembrane passes span 6–26, 32–52, and 67–87; these read LGHF…GIFL, IIIL…LVAF, and LVLT…VVFF.

The protein belongs to the complex I subunit 4L family. In terms of assembly, NDH-1 is composed of 14 different subunits. Subunits NuoA, H, J, K, L, M, N constitute the membrane sector of the complex.

It localises to the cell inner membrane. It catalyses the reaction a quinone + NADH + 5 H(+)(in) = a quinol + NAD(+) + 4 H(+)(out). Functionally, NDH-1 shuttles electrons from NADH, via FMN and iron-sulfur (Fe-S) centers, to quinones in the respiratory chain. The immediate electron acceptor for the enzyme in this species is believed to be ubiquinone. Couples the redox reaction to proton translocation (for every two electrons transferred, four hydrogen ions are translocated across the cytoplasmic membrane), and thus conserves the redox energy in a proton gradient. This is NADH-quinone oxidoreductase subunit K 1 from Rhodopseudomonas palustris (strain ATCC BAA-98 / CGA009).